A 248-amino-acid chain; its full sequence is Small ribosomal subunit protein uS2 (248 aa).

Belongs to the universal ribosomal protein uS2 family.

This Herminiimonas arsenicoxydans protein is Small ribosomal subunit protein uS2.